Consider the following 437-residue polypeptide: Chaperone SurA (437 aa).

Positions 1 to 27 (MHNHVFKTIARHGLIALFFFFSISAMA) are cleaved as a signal peptide. 2 consecutive PpiC domains span residues 179–280 (QDEF…KLLN) and 290–388 (VDQT…QVLE).

The protein resides in the periplasm. It catalyses the reaction [protein]-peptidylproline (omega=180) = [protein]-peptidylproline (omega=0). Chaperone involved in the correct folding and assembly of outer membrane proteins. Recognizes specific patterns of aromatic residues and the orientation of their side chains, which are found more frequently in integral outer membrane proteins. May act in both early periplasmic and late outer membrane-associated steps of protein maturation. The polypeptide is Chaperone SurA (Methylobacillus flagellatus (strain ATCC 51484 / DSM 6875 / VKM B-1610 / KT)).